The following is a 696-amino-acid chain: MNKIRKTFQYGKHEVTFETGEMARQATGAVVVRMGDTVLLVSVVAKKEAEEGRDFFPLTVNYQEKTYAAGKIPGGYFKREGRPTEKETLTSRLIDRPLRPLFPKGFTNEVQVIATVLSVDSKVPTDIPAILGASAAIGLSGIPFNGSLGAARVGYRGGEYLLNPSLDELKDSALDLVVAGTRDAVLMVESEAQELPESVMLGAVLHGHQAMQVAIQAIAEFIQEAGGAKWEWEPPTVNTALEKLVVEKSEAPLKKAYQIQEKTARQAQIQAIRDQLLADRAAEREGEENAVNEHELAVIFHELERRIVREQILTGQPRIDGRDTKTVRPITVKVGVLPRSHGSALFTRGETQALVVTTLGTERDAQSIDDLDGDRQEEFIFHYNFPPFCVGEVGFMSGPKRREIGHGRLAKRAVVPVVPTLDKFPYVIRVVSEILESNGSSSMASVCGSSLALMDAGVPTKAPVAGIAMGLIKENDKYAVLSDILGDEDHLGDMDFKVAGTSNGVTALQMDIKIEGITKEIMEQALDQAKEGRLHILSIMNKVLDKPRSQVSDLAPQYVTMKINPEKIRDVIGKGGVVIREITEATNCAIDISDDGTIKIAAHTTEEGEAAKRRIEELTAEVELGKVYEGTVVKITDFGAFVQILPNTQGLVHISQIAQERVENVRDYLEEGQVIRVKVIEIDRQGRVRLSMKQID.

The Mg(2+) site is built by D489 and D495. In terms of domain architecture, KH spans 556–615 (PQYVTMKINPEKIRDVIGKGGVVIREITEATNCAIDISDDGTIKIAAHTTEEGEAAKRRI). Residues 625–693 (GKVYEGTVVK…RQGRVRLSMK (69 aa)) enclose the S1 motif domain.

The protein belongs to the polyribonucleotide nucleotidyltransferase family. As to quaternary structure, component of the RNA degradosome, which is a multiprotein complex involved in RNA processing and mRNA degradation. Mg(2+) is required as a cofactor.

The protein resides in the cytoplasm. It carries out the reaction RNA(n+1) + phosphate = RNA(n) + a ribonucleoside 5'-diphosphate. Its function is as follows. Involved in mRNA degradation. Catalyzes the phosphorolysis of single-stranded polyribonucleotides processively in the 3'- to 5'-direction. The sequence is that of Polyribonucleotide nucleotidyltransferase from Coxiella burnetii (strain CbuK_Q154) (Coxiella burnetii (strain Q154)).